A 171-amino-acid chain; its full sequence is Peptide deformylase (171 aa).

Fe cation is bound by residues Cys91 and His133. Residue Glu134 is part of the active site. His137 contributes to the Fe cation binding site.

Belongs to the polypeptide deformylase family. Requires Fe(2+) as cofactor.

It carries out the reaction N-terminal N-formyl-L-methionyl-[peptide] + H2O = N-terminal L-methionyl-[peptide] + formate. Removes the formyl group from the N-terminal Met of newly synthesized proteins. Requires at least a dipeptide for an efficient rate of reaction. N-terminal L-methionine is a prerequisite for activity but the enzyme has broad specificity at other positions. The polypeptide is Peptide deformylase (Cronobacter sakazakii (strain ATCC BAA-894) (Enterobacter sakazakii)).